Here is a 446-residue protein sequence, read N- to C-terminus: Protein odr-4 homolog (446 aa).

A helical membrane pass occupies residues 76-96 (ASQVGRMLPGGLMVLGVFLMT). Residues 394–415 (HPEKRESEPASQHLESKPENKA) are compositionally biased toward basic and acidic residues. The tract at residues 394 to 417 (HPEKRESEPASQHLESKPENKARS) is disordered. The helical transmembrane segment at 426 to 446 (GLVISTIVASIAIIISFYYIM) threads the bilayer.

Belongs to the ODR-4 family.

The protein resides in the membrane. Functionally, may play a role in the trafficking of a subset of G-protein coupled receptors. The sequence is that of Protein odr-4 homolog (odr4) from Xenopus laevis (African clawed frog).